The primary structure comprises 487 residues: Betaine aldehyde dehydrogenase (487 aa).

2 residues coordinate K(+): Ser26 and Asp93. 150 to 152 (GAW) is a binding site for NAD(+). Residue Lys162 is the Charge relay system of the active site. NAD(+) is bound by residues 176–179 (KPSE) and 229–232 (SVPT). K(+) is bound at residue Leu244. The active-site Proton acceptor is Glu250. NAD(+) is bound by residues Gly252, Cys284, and Glu384. Cys284 (nucleophile) is an active-site residue. Cys284 carries the cysteine sulfenic acid (-SOH) modification. Residues Lys454 and Gly457 each contribute to the K(+) site. Glu461 serves as the catalytic Charge relay system.

Belongs to the aldehyde dehydrogenase family. In terms of assembly, dimer of dimers. Requires K(+) as cofactor.

The enzyme catalyses betaine aldehyde + NAD(+) + H2O = glycine betaine + NADH + 2 H(+). It functions in the pathway amine and polyamine biosynthesis; betaine biosynthesis via choline pathway; betaine from betaine aldehyde: step 1/1. Involved in the biosynthesis of the osmoprotectant glycine betaine. Catalyzes the irreversible oxidation of betaine aldehyde to the corresponding acid. This is Betaine aldehyde dehydrogenase from Rhizobium etli (strain ATCC 51251 / DSM 11541 / JCM 21823 / NBRC 15573 / CFN 42).